The sequence spans 502 residues: MSGGLLIAGTTSDAGKSVVTAGICRWLVRQGVKVAPFKAQNMSLNSFVTREGAEIGRAQAMQAQAARVEPTALMNPVLLKPGSDRSSQVVLMGRPVGEMSARGYHGGRQEALLGTVLDCLAELRGTYDAVICEGAGSPAEINLRRTDIVNMGIARNARLPVLVVGDIDRGGVFASFFGTVALLSREDQELVAGFLVNKFRGDVSLLEPGLDMLRNLTGRPSYGVLPFQHGLGIDEEDGLRVSLRGSVRESAVSSPVGEDILRVAVCAIPLMSNFTDVDALAAEPGVVVRFVDRPEELADADLVVIPGTRGTVKALEWLRERGLAEALRRRAAAGRPVLGICGGFQVLGEHIEDDVESRRGHVEGLGLLPVRVRFAREKTLTRPVGEALGEHVEGYEIHHGVADVTGGDPFLDGCRVGAVWGTHWHGSLESDGFRRAFLREVAAAAGRRFVPAAGTSFAGLREEQLDRLGDLIEEHADTDALWRLIESGAPSGLPFIPPGAPA.

A GATase cobBQ-type domain is found at 260-433; the sequence is ILRVAVCAIP…WHGSLESDGF (174 aa). Cys-341 (nucleophile) is an active-site residue. Residue His-425 is part of the active site.

This sequence belongs to the CobB/CobQ family. CobQ subfamily.

It functions in the pathway cofactor biosynthesis; adenosylcobalamin biosynthesis. Functionally, catalyzes amidations at positions B, D, E, and G on adenosylcobyrinic A,C-diamide. NH(2) groups are provided by glutamine, and one molecule of ATP is hydrogenolyzed for each amidation. The polypeptide is Cobyric acid synthase (Streptomyces avermitilis (strain ATCC 31267 / DSM 46492 / JCM 5070 / NBRC 14893 / NCIMB 12804 / NRRL 8165 / MA-4680)).